Reading from the N-terminus, the 238-residue chain is Ribonuclease PH (238 aa).

Residues Arg86 and 124–126 (GTR) each bind phosphate.

This sequence belongs to the RNase PH family. In terms of assembly, homohexameric ring arranged as a trimer of dimers.

It catalyses the reaction tRNA(n+1) + phosphate = tRNA(n) + a ribonucleoside 5'-diphosphate. In terms of biological role, phosphorolytic 3'-5' exoribonuclease that plays an important role in tRNA 3'-end maturation. Removes nucleotide residues following the 3'-CCA terminus of tRNAs; can also add nucleotides to the ends of RNA molecules by using nucleoside diphosphates as substrates, but this may not be physiologically important. Probably plays a role in initiation of 16S rRNA degradation (leading to ribosome degradation) during starvation. The polypeptide is Ribonuclease PH (Caulobacter vibrioides (strain ATCC 19089 / CIP 103742 / CB 15) (Caulobacter crescentus)).